Reading from the N-terminus, the 203-residue chain is HTH-type transcriptional regulator BetI (203 aa).

The HTH tetR-type domain occupies 8–68; the sequence is PVRRKALVDA…ATIRSLLGKL (61 aa). The segment at residues 31-50 is a DNA-binding region (H-T-H motif); it reads TMSEIARTAGVSPALAHHYF.

The protein operates within amine and polyamine biosynthesis; betaine biosynthesis via choline pathway [regulation]. Functionally, repressor involved in the biosynthesis of the osmoprotectant glycine betaine. It represses transcription of the choline transporter BetT and the genes of BetAB involved in the synthesis of glycine betaine. The sequence is that of HTH-type transcriptional regulator BetI from Rhizobium meliloti (strain 1021) (Ensifer meliloti).